Consider the following 141-residue polypeptide: Proteasome maturation protein (141 aa).

Residue K39 forms a Glycyl lysine isopeptide (Lys-Gly) (interchain with G-Cter in SUMO2) linkage. The short motif at 68-72 (RNIQG) is the High-affinity association with the preproteasome element.

Belongs to the POMP/UMP1 family. Constituent of preproteasomes, but not of mature 20S proteasomes. Within the preproteasome, may directly interact with PSMB1/beta6, PSMB4/beta7, PSMB5/beta5, PSMB6/beta1 and PSMB9/beta1i. Interaction with PSMB8/beta5i has been observed in PubMed:10973495, but not in PubMed:10926487. Forms tetramers. Strongly expressed from the basal layer to the granular layer of healthy epidermis, whereas in KLICK patients there is a gradual decrease of expression toward the granular layer.

It is found in the cytoplasm. It localises to the cytosol. Its subcellular location is the nucleus. The protein localises to the microsome membrane. In terms of biological role, molecular chaperone essential for the assembly of standard proteasomes and immunoproteasomes. Degraded after completion of proteasome maturation. Mediates the association of 20S preproteasome with the endoplasmic reticulum. This Homo sapiens (Human) protein is Proteasome maturation protein.